Here is a 462-residue protein sequence, read N- to C-terminus: MSPFAPFDAQTQVLLIDDDPHLRQALRQTLDLAGLKVATLDDARQLDTAQCKDWPGVVVSDIRMPGIDGMELLRQLHEQDADLPVILITGHGDVPLAVQAMRGGAYDFLEKPFPSDALLDSVRRALEVRRLVLENRTLRLALAERHELHGRLIGRSAGMQRLREQVGSLAAIQADVLVLGETGAGKEVVARALHDLSSRRDGPFVAINAGALAESVVESELFGHEAGAFTGAQKRRIGKFEYANGGTLFLDEIESMSLDVQVKLLRLLQERVVERLGSNQLIPLDIRIIAATKEDLRQAADQGRFRADLYYRLNVASLRIPPLRERGEDIPLLFRHFAEAGAMRHGLTPRELDAGQSARLLAYDWPGNVRELQNAAERFALGLGLSLDDGVLPDAADEPHNLSAKVEAFERSLIAAELERPHNSLRSVAEALGIPRKTLHDKLRKHGLPFNTPGENPPDDGE.

Residues 12-126 form the Response regulatory domain; that stretch reads QVLLIDDDPH…ALLDSVRRAL (115 aa). A 4-aspartylphosphate modification is found at D61. The Sigma-54 factor interaction domain maps to 152–381; it reads LIGRSAGMQR…LQNAAERFAL (230 aa). Residues 180-187 and 243-252 each bind ATP; these read GETGAGKE and ANGGTLFLDE.

Post-translationally, phosphorylated by DctB.

Member of the two-component regulatory system DctB/DctD, which regulates C4-dicarboxylate transport via regulation of expression of the dctPQM operon and dctA. The protein is C4-dicarboxylate transport transcriptional regulatory protein DctD of Pseudomonas aeruginosa (strain ATCC 15692 / DSM 22644 / CIP 104116 / JCM 14847 / LMG 12228 / 1C / PRS 101 / PAO1).